The sequence spans 502 residues: Cytochrome P450 71A8 (502 aa).

Residues 16 to 36 form a helical membrane-spanning segment; that stretch reads IISHTLAFQALVSLILLISIT. Positions 93–119 are disordered; it reads PVSSRRRPRGNHENSRSRLRRPRGSRS. Cys447 lines the heme pocket.

It belongs to the cytochrome P450 family. Requires heme as cofactor.

It is found in the membrane. The chain is Cytochrome P450 71A8 (CYP71A8) from Mentha piperita (Peppermint).